Reading from the N-terminus, the 135-residue chain is MNRDIGKNAERELVSILRGEGFNAVRIPTSNSSPNPLPDIFATKENTLLSIECKSTWENKVKVKENQVRKLFEFLSMFTMSGIPIIAVKFKQIHEWRVLIPKKAEDIVVTIDNTISIEDLFKILEKSVEEKILTP.

E10, D39, and E52 together coordinate Mg(2+).

Belongs to the Holliday junction resolvase Hjc family. Hje subfamily. In terms of assembly, homodimer. It depends on Mg(2+) as a cofactor.

The enzyme catalyses Endonucleolytic cleavage at a junction such as a reciprocal single-stranded crossover between two homologous DNA duplexes (Holliday junction).. Functionally, a structure-specific endonuclease that resolves Holliday junction (HJ) intermediates during genetic recombination. Acts only on 4-way DNA junctions in a sequence non-specific manner; introduces paired nicks in opposing strands 2 bases 3' of the point of strand exchange only on continuous strands of 4-way junction DNA. Cleaves both mobile and immobile junctions. Plays a more direct role in DNA repair than Hjc. Overexpression of this protein decreases the growth rate, and leads to genomic instability, and global transcriptomic changes. This Saccharolobus islandicus (strain REY15A) (Sulfolobus islandicus) protein is Crossover junction endodeoxyribonuclease Hje.